Consider the following 51-residue polypeptide: Insulin (51 aa).

Cystine bridges form between Cys-7-Cys-37, Cys-19-Cys-50, and Cys-36-Cys-41.

The protein belongs to the insulin family. As to quaternary structure, heterodimer of a B chain and an A chain linked by two disulfide bonds.

Its subcellular location is the secreted. Functionally, insulin decreases blood glucose concentration. It increases cell permeability to monosaccharides, amino acids and fatty acids. It accelerates glycolysis, the pentose phosphate cycle, and glycogen synthesis in liver. This is Insulin (INS) from Balaenoptera physalus (Fin whale).